The sequence spans 263 residues: Endonuclease 8 (263 aa).

The active-site Schiff-base intermediate with DNA is the proline 2. Glutamate 3 functions as the Proton donor in the catalytic mechanism. The active-site Proton donor; for beta-elimination activity is the lysine 53. Residues glutamine 70, arginine 125, and asparagine 169 each coordinate DNA. The segment at 229 to 263 (KVFHRDGEACERCGGIIEKTTLSSRPFYWCPHCQK) adopts an FPG-type zinc-finger fold. Arginine 253 functions as the Proton donor; for delta-elimination activity in the catalytic mechanism.

This sequence belongs to the FPG family. Requires Zn(2+) as cofactor.

The catalysed reaction is 2'-deoxyribonucleotide-(2'-deoxyribose 5'-phosphate)-2'-deoxyribonucleotide-DNA = a 3'-end 2'-deoxyribonucleotide-(2,3-dehydro-2,3-deoxyribose 5'-phosphate)-DNA + a 5'-end 5'-phospho-2'-deoxyribonucleoside-DNA + H(+). Involved in base excision repair of DNA damaged by oxidation or by mutagenic agents. Acts as a DNA glycosylase that recognizes and removes damaged bases. Has a preference for oxidized pyrimidines, such as thymine glycol, 5,6-dihydrouracil and 5,6-dihydrothymine. Has AP (apurinic/apyrimidinic) lyase activity and introduces nicks in the DNA strand. Cleaves the DNA backbone by beta-delta elimination to generate a single-strand break at the site of the removed base with both 3'- and 5'-phosphates. This is Endonuclease 8 from Salmonella heidelberg (strain SL476).